The primary structure comprises 122 residues: Small ribosomal subunit protein uS13 (122 aa).

The disordered stretch occupies residues K94 to K122.

The protein belongs to the universal ribosomal protein uS13 family. In terms of assembly, part of the 30S ribosomal subunit. Forms a loose heterodimer with protein S19. Forms two bridges to the 50S subunit in the 70S ribosome.

Functionally, located at the top of the head of the 30S subunit, it contacts several helices of the 16S rRNA. In the 70S ribosome it contacts the 23S rRNA (bridge B1a) and protein L5 of the 50S subunit (bridge B1b), connecting the 2 subunits; these bridges are implicated in subunit movement. Contacts the tRNAs in the A and P-sites. In Methylorubrum extorquens (strain PA1) (Methylobacterium extorquens), this protein is Small ribosomal subunit protein uS13.